A 317-amino-acid chain; its full sequence is Putative 2-hydroxyacid dehydrogenase SERP1888 (317 aa).

Residues 155-156 (EI), 234-236 (AGR), and Asp260 each bind NAD(+). Residue Arg236 is part of the active site. Glu265 is an active-site residue. The active-site Proton donor is the His283. 283 to 286 (HIGN) provides a ligand contact to NAD(+).

This sequence belongs to the D-isomer specific 2-hydroxyacid dehydrogenase family.

The protein is Putative 2-hydroxyacid dehydrogenase SERP1888 of Staphylococcus epidermidis (strain ATCC 35984 / DSM 28319 / BCRC 17069 / CCUG 31568 / BM 3577 / RP62A).